The primary structure comprises 370 residues: Protein STRICTOSIDINE SYNTHASE-LIKE 4 (370 aa).

The first 21 residues, 1–21 (MVLFFSTRFLFFSIFFPCLIS), serve as a signal peptide directing secretion. N101 carries N-linked (GlcNAc...) asparagine glycosylation. Position 303 is a phosphotyrosine (Y303).

Belongs to the strictosidine synthase family.

It is found in the vacuole. The sequence is that of Protein STRICTOSIDINE SYNTHASE-LIKE 4 from Arabidopsis thaliana (Mouse-ear cress).